A 440-amino-acid chain; its full sequence is Trigger factor (440 aa).

Residues 163 to 248 (GEIVSVTFEA…VHVIKERTLP (86 aa)) form the PPIase FKBP-type domain.

It belongs to the FKBP-type PPIase family. Tig subfamily.

Its subcellular location is the cytoplasm. The enzyme catalyses [protein]-peptidylproline (omega=180) = [protein]-peptidylproline (omega=0). In terms of biological role, involved in protein export. Acts as a chaperone by maintaining the newly synthesized protein in an open conformation. Functions as a peptidyl-prolyl cis-trans isomerase. In Solidesulfovibrio magneticus (strain ATCC 700980 / DSM 13731 / RS-1) (Desulfovibrio magneticus), this protein is Trigger factor.